Reading from the N-terminus, the 340-residue chain is UDP-3-O-acylglucosamine N-acyltransferase (340 aa).

Residue His238 is the Proton acceptor of the active site.

This sequence belongs to the transferase hexapeptide repeat family. LpxD subfamily. As to quaternary structure, homotrimer.

The catalysed reaction is a UDP-3-O-[(3R)-3-hydroxyacyl]-alpha-D-glucosamine + a (3R)-hydroxyacyl-[ACP] = a UDP-2-N,3-O-bis[(3R)-3-hydroxyacyl]-alpha-D-glucosamine + holo-[ACP] + H(+). It functions in the pathway bacterial outer membrane biogenesis; LPS lipid A biosynthesis. Catalyzes the N-acylation of UDP-3-O-acylglucosamine using 3-hydroxyacyl-ACP as the acyl donor. Is involved in the biosynthesis of lipid A, a phosphorylated glycolipid that anchors the lipopolysaccharide to the outer membrane of the cell. This is UDP-3-O-acylglucosamine N-acyltransferase from Shewanella frigidimarina (strain NCIMB 400).